A 529-amino-acid chain; its full sequence is Listeriolysin O (529 aa).

The signal sequence occupies residues M1–A24. Positions S35–E54 are disordered. The next 4 membrane-spanning stretches (beta stranded) occupy residues E214–A227, V234–K243, S312–A321, and S329–S341. A Conserved undecapeptide motif is present at residues E483–R493. A Cholesterol binding motif is present at residues T515–L516.

Belongs to the cholesterol-dependent cytolysin family. As to quaternary structure, homooligomeric pore complex of 35 to 50 subunits; when inserted in the host membrane.

The protein resides in the secreted. It is found in the host membrane. Its subcellular location is the host cell membrane. With respect to regulation, activity of listeriolysin O is regulated on multiple levels. It should be high in the phagosome, thereby allowing escape of the bacteria from the phagosomal compartment. Then, once inside the host cytosol, the activity must be controlled to prevent lysis of the host plasma membrane and loss of the intracellular environment. Functionally, a cholesterol-dependent toxin that causes cytolysis by forming pores in cholesterol containing host membranes. After binding to target membranes, the protein undergoes a major conformation change, leading to its insertion in the host membrane and formation of an oligomeric pore complex. Cholesterol is required for binding to host membranes, membrane insertion and pore formation; cholesterol binding is mediated by a Thr-Leu pair in the C-terminus. Acts as a major virulence factor required for the escape of bacteria from phagosomal vacuoles and entry into the host cytosol. Can be reversibly inactivated by oxidation. This Listeria monocytogenes serotype 1/2a (strain 08-5578) protein is Listeriolysin O (hly).